Here is a 324-residue protein sequence, read N- to C-terminus: Endochitinase 1 (324 aa).

An N-terminal signal peptide occupies residues 1–22 (MSFLQALSIFLLLLLYVVVGSA). Residues 23–64 (EQCGRQAGGALCPGGLCCSQFGWCGSTADYCTVPGCQSQCSG) enclose the Chitin-binding type-1 domain. Disulfide bonds link cysteine 25/cysteine 40, cysteine 34/cysteine 46, cysteine 39/cysteine 53, cysteine 58/cysteine 62, cysteine 95/cysteine 158, cysteine 170/cysteine 178, and cysteine 277/cysteine 309. Glutamate 139 functions as the Proton donor in the catalytic mechanism. The propeptide at 318 to 324 (GVSVDSM) is removed in mature form.

The protein belongs to the glycosyl hydrolase 19 family. Chitinase class I subfamily.

The catalysed reaction is Random endo-hydrolysis of N-acetyl-beta-D-glucosaminide (1-&gt;4)-beta-linkages in chitin and chitodextrins.. Its function is as follows. Defense against chitin-containing fungal pathogens. The protein is Endochitinase 1 of Gossypium hirsutum (Upland cotton).